A 1426-amino-acid chain; its full sequence is Protein RhsD (1426 aa).

Residues 256–285 form a disordered region; the sequence is AEEARTSSLSSSDSSRPLSASAFPDTLPGT. A compositionally biased stretch (low complexity) spans 262-277; it reads SSLSSSDSSRPLSASA. Positions 320 to 1197 are 28 X approximate tandem repeats; it reads YTEAGELLAV…LNEENPHHVY (878 aa). 27 consecutive repeat copies span residues 334-356, 357-378, 379-421, 422-442, 443-464, 465-485, 486-506, 507-529, 530-550, 551-571, 572-592, 593-613, 614-633, 634-654, 655-675, 676-695, 696-715, 716-738, 739-762, 812-832, 833-861, 862-882, 883-905, 906-941, 942-970, 971-995, and 996-1030. Residues 1073–1085 are compositionally biased toward basic and acidic residues; that stretch reads ENGEREKAQRRSL. A disordered region spans residues 1073-1097; that stretch reads ENGEREKAQRRSLAETLQQEGSENG. Copy 28 of the repeat occupies 1173–1197; sequence GNTAWSAEYDEWGNQLNEENPHHVY.

It belongs to the RHS family.

In terms of biological role, rhs elements have a nonessential function. They may play an important role in the natural ecology of the cell. The sequence is that of Protein RhsD (rhsD) from Escherichia coli (strain K12).